Reading from the N-terminus, the 135-residue chain is MSHKRFNPLTASSSDEDELETPIREVEDSSSDEETDSDSDSELGKKDEVVTEVSALNNQESKSVKISEKSVAKRSRETHEAQASADVKKAKKVKKRGGGGGEEAETKKAYFQRVWTDDDEIVVLEGFIDYKNDSG.

Residues 1–104 form a disordered region; sequence MSHKRFNPLT…KRGGGGGEEA (104 aa). Acidic residues predominate over residues 28-41; that stretch reads DSSSDEETDSDSDS. Residues 62 to 80 show a composition bias toward basic and acidic residues; the sequence is KSVKISEKSVAKRSRETHE.

It belongs to the GeBP family.

The chain is Probable transcription factor At2g20613 from Arabidopsis thaliana (Mouse-ear cress).